The chain runs to 468 residues: 3-isopropylmalate dehydratase large subunit (468 aa).

Residues cysteine 347, cysteine 407, and cysteine 410 each contribute to the [4Fe-4S] cluster site.

It belongs to the aconitase/IPM isomerase family. LeuC type 1 subfamily. In terms of assembly, heterodimer of LeuC and LeuD. Requires [4Fe-4S] cluster as cofactor.

The enzyme catalyses (2R,3S)-3-isopropylmalate = (2S)-2-isopropylmalate. It participates in amino-acid biosynthesis; L-leucine biosynthesis; L-leucine from 3-methyl-2-oxobutanoate: step 2/4. In terms of biological role, catalyzes the isomerization between 2-isopropylmalate and 3-isopropylmalate, via the formation of 2-isopropylmaleate. This Glaesserella parasuis serovar 5 (strain SH0165) (Haemophilus parasuis) protein is 3-isopropylmalate dehydratase large subunit.